The following is a 344-amino-acid chain: Methylthioribose-1-phosphate isomerase (344 aa).

Substrate is bound by residues 55–57, Arg98, and Gln202; that span reads RGA. Asp243 (proton donor) is an active-site residue. 253–254 lines the substrate pocket; the sequence is NK.

The protein belongs to the eIF-2B alpha/beta/delta subunits family. MtnA subfamily.

It carries out the reaction 5-(methylsulfanyl)-alpha-D-ribose 1-phosphate = 5-(methylsulfanyl)-D-ribulose 1-phosphate. The protein operates within amino-acid biosynthesis; L-methionine biosynthesis via salvage pathway; L-methionine from S-methyl-5-thio-alpha-D-ribose 1-phosphate: step 1/6. Its function is as follows. Catalyzes the interconversion of methylthioribose-1-phosphate (MTR-1-P) into methylthioribulose-1-phosphate (MTRu-1-P). This Gemmatimonas aurantiaca (strain DSM 14586 / JCM 11422 / NBRC 100505 / T-27) protein is Methylthioribose-1-phosphate isomerase.